The primary structure comprises 98 residues: Ferredoxin-like protein (98 aa).

It to ferredoxins from P.putida and C.tartarivorum, ferredoxin I from A.vinelandii, ferredoxin II from D.desulfuricans.

Functionally, could be a 3Fe-4S cluster-containing protein. The polypeptide is Ferredoxin-like protein (fixX) (Rhizobium leguminosarum bv. trifolii).